The chain runs to 402 residues: Enoyl-[acyl-carrier-protein] reductase [NADH] (402 aa).

NAD(+) is bound by residues 48–53 (GASSGF), 75–76 (FE), 112–113 (DV), and 141–142 (IA). A substrate-binding site is contributed by tyrosine 231. The Proton donor role is filled by tyrosine 241. Residues lysine 250 and 279–281 (LVT) each bind NAD(+).

The protein belongs to the TER reductase family. Monomer.

It carries out the reaction a 2,3-saturated acyl-[ACP] + NAD(+) = a (2E)-enoyl-[ACP] + NADH + H(+). It participates in lipid metabolism; fatty acid biosynthesis. Involved in the final reduction of the elongation cycle of fatty acid synthesis (FAS II). Catalyzes the reduction of a carbon-carbon double bond in an enoyl moiety that is covalently linked to an acyl carrier protein (ACP). The polypeptide is Enoyl-[acyl-carrier-protein] reductase [NADH] (Vibrio cholerae serotype O1 (strain ATCC 39541 / Classical Ogawa 395 / O395)).